Reading from the N-terminus, the 491-residue chain is Ketol-acid reductoisomerase (NADP(+)) (491 aa).

A KARI N-terminal Rossmann domain is found at 15–208 (AQLGKCRFMG…GGHRAGVLES (194 aa)). NADP(+) is bound by residues 45–48 (CGAQ), arginine 68, arginine 76, serine 78, and 108–110 (DKQ). Residue histidine 132 is part of the active site. Glycine 158 contributes to the NADP(+) binding site. KARI C-terminal knotted domains lie at 209-344 (SFVA…TAPQ) and 345-484 (YEGK…MTDM). Aspartate 217, glutamate 221, glutamate 389, and glutamate 393 together coordinate Mg(2+). Serine 414 contributes to the substrate binding site.

This sequence belongs to the ketol-acid reductoisomerase family. The cofactor is Mg(2+).

The catalysed reaction is (2R)-2,3-dihydroxy-3-methylbutanoate + NADP(+) = (2S)-2-acetolactate + NADPH + H(+). It catalyses the reaction (2R,3R)-2,3-dihydroxy-3-methylpentanoate + NADP(+) = (S)-2-ethyl-2-hydroxy-3-oxobutanoate + NADPH + H(+). It participates in amino-acid biosynthesis; L-isoleucine biosynthesis; L-isoleucine from 2-oxobutanoate: step 2/4. The protein operates within amino-acid biosynthesis; L-valine biosynthesis; L-valine from pyruvate: step 2/4. Functionally, involved in the biosynthesis of branched-chain amino acids (BCAA). Catalyzes an alkyl-migration followed by a ketol-acid reduction of (S)-2-acetolactate (S2AL) to yield (R)-2,3-dihydroxy-isovalerate. In the isomerase reaction, S2AL is rearranged via a Mg-dependent methyl migration to produce 3-hydroxy-3-methyl-2-ketobutyrate (HMKB). In the reductase reaction, this 2-ketoacid undergoes a metal-dependent reduction by NADPH to yield (R)-2,3-dihydroxy-isovalerate. The protein is Ketol-acid reductoisomerase (NADP(+)) of Citrobacter koseri (strain ATCC BAA-895 / CDC 4225-83 / SGSC4696).